We begin with the raw amino-acid sequence, 118 residues long: MKRIAFVFSTAPHGSASGREGLDALLATSALTEALGVFFISDGVFQLLPGQKPDAVLARDYIATFKLFDLYDIDQCWICAASLRERGLENVNFVVDATPLEPVALRRELGNYDVILRF.

This sequence belongs to the DsrF/TusC family. In terms of assembly, heterohexamer, formed by a dimer of trimers. The hexameric TusBCD complex contains 2 copies each of TusB, TusC and TusD. The TusBCD complex interacts with TusE.

Its subcellular location is the cytoplasm. In terms of biological role, part of a sulfur-relay system required for 2-thiolation of 5-methylaminomethyl-2-thiouridine (mnm(5)s(2)U) at tRNA wobble positions. The chain is Protein TusC from Salmonella agona (strain SL483).